The sequence spans 1270 residues: Glycine betaine reductase ATRR (1270 aa).

The segment at 14–418 is adenylation (A) domain; sequence FTQQVRASPN…MIKLRGYSVV (405 aa). The Carrier domain maps to 528–605; sequence KEDPIGIEDI…GHLDTVRAIR (78 aa). O-(pantetheine 4'-phosphoryl)serine is present on serine 565. The interval 643–937 is carboxylic acid reductase domain R1; sequence KTVLLTGVTG…EPLSWDDWVA (295 aa). Residues 1026–1256 form an aldehyde reductase domain R2 region; the sequence is PLSGKVAVVT…IYALRQPEHV (231 aa).

Belongs to the NRP synthetase family.

With respect to regulation, the tetramethylammonium ion, which mimics the head group of glycine betaine, acts as a competitive inhibitor of ATRR A domain, whereas the potency decreased by three orders of magnitude with dimethylammonium. Choline is a mixed inhibitor for both glycine betaine reductase and aldehyde reductase activity but more potent in competition against glycine betaine in the first reduction step. Therefore, choline could act as a feedback inhibitor to regulate ATRR enzymatic activity. The lowered binding affinity of choline to R2 favors the release of choline after glycine betaine aldehyde reduction to avoid direct product inhibition. In terms of biological role, NRPS-like enzyme with an unusual domain architecture that converts back glycine betaine to choline via a 2-step reduction mechanism, and thereby can be an alternative source of choline. Permits direct reutilization of endogenously stored glycine betaine for on-demand biosynthesis of choline and choline derivatives, including phospholipid phosphatidylcholine (PC) which has an essential role in maintaining membrane integrity and functionality, or choline-O-sulfate, a mean for intracellular sulfate storage. Glycine betaine is activated by the adenylation (A) domain, and transferred to the thiolation (T) domain. Movement of the phosphopantetheine arm to the thioester reductase domain R1 then allows thioester reduction by NADPH of glycine betainoyl thioester to glycine betaine aldehyde, which is in turn reduced to choline by the aldehyde reductase domain R2. The polypeptide is Glycine betaine reductase ATRR (Emericella nidulans (strain FGSC A4 / ATCC 38163 / CBS 112.46 / NRRL 194 / M139) (Aspergillus nidulans)).